Consider the following 74-residue polypeptide: Sec-independent protein translocase protein TatA (74 aa).

A helical transmembrane segment spans residues 1 to 21; sequence MGSFSIWHWLIVLLIVVLVFG.

The protein belongs to the TatA/E family. As to quaternary structure, the Tat system comprises two distinct complexes: a TatABC complex, containing multiple copies of TatA, TatB and TatC subunits, and a separate TatA complex, containing only TatA subunits. Substrates initially bind to the TatABC complex, which probably triggers association of the separate TatA complex to form the active translocon.

Its subcellular location is the cell inner membrane. Functionally, part of the twin-arginine translocation (Tat) system that transports large folded proteins containing a characteristic twin-arginine motif in their signal peptide across membranes. TatA could form the protein-conducting channel of the Tat system. The polypeptide is Sec-independent protein translocase protein TatA (Nitrosospira multiformis (strain ATCC 25196 / NCIMB 11849 / C 71)).